Reading from the N-terminus, the 135-residue chain is Fatty acid-binding protein 5 (135 aa).

N-acetylalanine is present on A2. Residue S3 is modified to Phosphoserine. The Nuclear localization signal motif lies at 24 to 34; sequence KELGVGLALRK. 1-eicosanoylglycerol is bound by residues C43, T56, and R109. The cysteines at positions 120 and 127 are disulfide-linked. Residue 129–131 participates in 1-eicosanoylglycerol binding; the sequence is RVY. 129 to 131 contributes to the (9Z,12Z)-octadecadienoate binding site; it reads RVY. Hexadecanoate is bound at residue Y131. Residue Y131 participates in N-eicosanoyl ethanolamine binding. The residue at position 131 (Y131) is a Phosphotyrosine.

This sequence belongs to the calycin superfamily. Fatty-acid binding protein (FABP) family. Monomer. Widely expressed.

It is found in the cytoplasm. Its subcellular location is the nucleus. It localises to the synapse. The protein resides in the postsynaptic density. The protein localises to the secreted. The enzyme catalyses hexadecanoate(out) = hexadecanoate(in). It catalyses the reaction (9Z,12Z)-octadecadienoate(out) = (9Z,12Z)-octadecadienoate(in). The catalysed reaction is (9Z)-octadecenoate(out) = (9Z)-octadecenoate(in). In terms of biological role, intracellular carrier for long-chain fatty acids and related active lipids, such as endocannabinoids, that regulate the metabolism and actions of the ligands they bind. In addition to the cytosolic transport, selectively delivers specific fatty acids from the cytosol to the nucleus, wherein they activate nuclear receptors. Delivers retinoic acid to the nuclear receptor peroxisome proliferator-activated receptor delta; which promotes proliferation and survival. May also serve as a synaptic carrier of endocannabinoid at central synapses and thus controls retrograde endocannabinoid signaling. Modulates inflammation by regulating PTGES induction via NF-kappa-B activation, and prostaglandin E2 (PGE2) biosynthesis during inflammation. May be involved in keratinocyte differentiation. The chain is Fatty acid-binding protein 5 from Mus musculus (Mouse).